Consider the following 142-residue polypeptide: Large ribosomal subunit protein bL21 (142 aa).

Residues 73 to 84 (KRRRQNSKRTRG) show a composition bias toward basic residues. Residues 73–142 (KRRRQNSKRT…KAAAKAESAE (70 aa)) are disordered. Over residues 107 to 125 (KAAEKKAPKADAAEGEAAK) the composition is skewed to basic and acidic residues. A compositionally biased stretch (basic residues) spans 126 to 135 (PKKAAPKKAA).

The protein belongs to the bacterial ribosomal protein bL21 family. In terms of assembly, part of the 50S ribosomal subunit. Contacts protein L20.

Functionally, this protein binds to 23S rRNA in the presence of protein L20. The sequence is that of Large ribosomal subunit protein bL21 from Brucella canis (strain ATCC 23365 / NCTC 10854 / RM-666).